The sequence spans 192 residues: tRNA (pseudouridine(54)-N(1))-methyltransferase (192 aa).

S-adenosyl-L-methionine contacts are provided by L127 and C181.

This sequence belongs to the methyltransferase superfamily. TrmY family. Homodimer.

It is found in the cytoplasm. It catalyses the reaction pseudouridine(54) in tRNA + S-adenosyl-L-methionine = N(1)-methylpseudouridine(54) in tRNA + S-adenosyl-L-homocysteine + H(+). Functionally, specifically catalyzes the N1-methylation of pseudouridine at position 54 (Psi54) in tRNAs. This chain is tRNA (pseudouridine(54)-N(1))-methyltransferase, found in Methanocella arvoryzae (strain DSM 22066 / NBRC 105507 / MRE50).